Here is a 188-residue protein sequence, read N- to C-terminus: Elongation factor P (188 aa).

The protein belongs to the elongation factor P family.

The protein resides in the cytoplasm. It participates in protein biosynthesis; polypeptide chain elongation. Functionally, involved in peptide bond synthesis. Stimulates efficient translation and peptide-bond synthesis on native or reconstituted 70S ribosomes in vitro. Probably functions indirectly by altering the affinity of the ribosome for aminoacyl-tRNA, thus increasing their reactivity as acceptors for peptidyl transferase. The sequence is that of Elongation factor P from Wolbachia sp. subsp. Brugia malayi (strain TRS).